A 579-amino-acid polypeptide reads, in one-letter code: Putative adenine deaminase OB0751 (579 aa).

The protein belongs to the metallo-dependent hydrolases superfamily. Adenine deaminase family.

The catalysed reaction is adenine + H2O + H(+) = hypoxanthine + NH4(+). In Oceanobacillus iheyensis (strain DSM 14371 / CIP 107618 / JCM 11309 / KCTC 3954 / HTE831), this protein is Putative adenine deaminase OB0751.